A 291-amino-acid chain; its full sequence is Phosphatidylglycerol--prolipoprotein diacylglyceryl transferase (291 aa).

A run of 7 helical transmembrane segments spans residues 21 to 41, 60 to 80, 96 to 116, 124 to 144, 198 to 218, 225 to 245, and 258 to 278; these read IALH…MWLA, LLYA…VLFY, WDGG…MWWF, FLQV…MGRI, SQLY…NLYI, GSVS…VEFF, and ISMG…MMIW. An a 1,2-diacyl-sn-glycero-3-phospho-(1'-sn-glycerol)-binding site is contributed by arginine 143.

It belongs to the Lgt family.

Its subcellular location is the cell inner membrane. It catalyses the reaction L-cysteinyl-[prolipoprotein] + a 1,2-diacyl-sn-glycero-3-phospho-(1'-sn-glycerol) = an S-1,2-diacyl-sn-glyceryl-L-cysteinyl-[prolipoprotein] + sn-glycerol 1-phosphate + H(+). It participates in protein modification; lipoprotein biosynthesis (diacylglyceryl transfer). Catalyzes the transfer of the diacylglyceryl group from phosphatidylglycerol to the sulfhydryl group of the N-terminal cysteine of a prolipoprotein, the first step in the formation of mature lipoproteins. This Photorhabdus laumondii subsp. laumondii (strain DSM 15139 / CIP 105565 / TT01) (Photorhabdus luminescens subsp. laumondii) protein is Phosphatidylglycerol--prolipoprotein diacylglyceryl transferase.